The primary structure comprises 414 residues: NFATC2-interacting protein (414 aa).

Positions 1-42 (MAEPLRRRGPRSRGGRASRGARRARAARGRCPRAPRSPTRLI) are disordered. Basic residues predominate over residues 7 to 33 (RRGPRSRGGRASRGARRARAARGRCPR). Phosphoserine occurs at positions 52 and 54. The interval 63–118 (ADPGEVPVARLPAPAAPEQDSDSDSEGAAEGPAGAPRTLVRRRRRLLDPGEAPVVP) is disordered. The span at 68–79 (VPVARLPAPAAP) shows a compositional bias: low complexity. Phosphoserine is present on residues Ser83, Ser85, and Ser87. Residues 90–100 (AAEGPAGAPRT) are compositionally biased toward low complexity. At Ser121 the chain carries Phosphoserine. Residue Lys123 forms a Glycyl lysine isopeptide (Lys-Gly) (interchain with G-Cter in SUMO2) linkage. Residues 139 to 208 (KLCPSEPEDE…SSRNKSRKHT (70 aa)) are disordered. A coiled-coil region spans residues 170-229 (KKKLRKKHEKEEKKMEEFPDQDISPLPQPSSRNKSRKHTEALQKLREVNKRLQDLRSCLS). Ser193, Ser199, and Ser309 each carry phosphoserine. Thr311 and Thr313 each carry phosphothreonine. In terms of domain architecture, Ubiquitin-like spans 343 to 414 (LRLRVQGKEK…ESGDLIEVWG (72 aa)). A phosphoserine mark is found at Ser364 and Ser385.

Interacts with NFATC2, TRAF1, TRAF2 and PRMT1. Interacts with UBE2I/UBC9. In terms of processing, methylation at the N-terminus by PRMT1 modulates interaction with the NFAT complex and results in augmented cytokine production.

Its subcellular location is the nucleus. The protein localises to the cytoplasm. In T-helper 2 (Th2) cells, regulates the magnitude of NFAT-driven transcription of a specific subset of cytokine genes, including IL3, IL4, IL5 and IL13, but not IL2. Recruits PRMT1 to the IL4 promoter; this leads to enhancement of histone H4 'Arg-3'-methylation and facilitates subsequent histone acetylation at the IL4 locus, thus promotes robust cytokine expression. Down-regulates formation of poly-SUMO chains by UBE2I/UBC9. In Rattus norvegicus (Rat), this protein is NFATC2-interacting protein (Nfatc2ip).